The primary structure comprises 1401 residues: Enhancer of mRNA-decapping protein 4 (1401 aa).

A2 is subject to N-acetylalanine. Phosphoserine is present on residues S3 and S6. A disordered region spans residues 23–42 (DRPAGGPSAESPRPSSAYNG). WD repeat units follow at residues 121–164 (QPVA…VISV), 167–206 (SERT…VWRL), 217–269 (ILVH…VWDL), 287–326 (KQGF…FWQI), 335–385 (RCLH…MWCT), 389–426 (TCLQ…LSDV), and 432–475 (YVME…LRHT). An N6-acetyllysine modification is found at K125. Residues 545–565 (TFGESRPELGSEGLGSAAHGS) are disordered. A phosphoserine mark is found at S560, S565, S583, and S585. Disordered regions lie at residues 603-628 (ASLQ…SSSS) and 662-702 (DGSL…QVPT). Residues 609–628 (TASPSSSSSGSSSSSSSSSS) show a composition bias toward low complexity. A compositionally biased stretch (polar residues) spans 663–675 (GSLTMSSSGSLQA). Position 676 is a phosphoserine (S676). Residues 677–689 (PRGLLPGLLPAPA) are compositionally biased toward low complexity. T693 bears the Phosphothreonine mark. A phosphoserine mark is found at S708, S723, and S725. Disordered stretches follow at residues 717–741 (LGLP…TALS) and 778–808 (LLSP…HNTP). Over residues 722–741 (ASPSRTRSPDVISSASTALS) the composition is skewed to polar residues. T727 is subject to Phosphothreonine. Phosphoserine occurs at positions 729 and 741. The residue at position 821 (T821) is a Phosphothreonine. Phosphoserine occurs at positions 844, 871, 875, 879, 887, 890, and 892. The tract at residues 868–946 (QRDSQDASAE…RLTEHQVAEP (79 aa)) is disordered. Residues 913–934 (GSPRTSPKLKRKSKKDDGDAAM) are sufficient for nuclear localization. Positions 954–1025 (IWQQQRELAE…GGQLQEQLTQ (72 aa)) form a coiled coil. Phosphoserine occurs at positions 967 and 1380.

This sequence belongs to the WD repeat EDC4 family. Part of a decapping complex consisting of DCP1A, DCP2, EDC3, EDC4 and probably DDX6. Part of a complex consisting of DCP1A, EDC3, EDC4 and DDX6. Part of a complex consisting of DCP1B, EDC3, EDC4 and DDX6. Interacts with DCP2. Interacts with RC3H1. Interacts with NBDY. Interacts with TEX19. Interacts with LSM14A. Interacts with DDX6. As to quaternary structure, (Microbial infection) Interacts with rotavirus A non-structural protein 2; this interaction probably plays a role in the sequestration of EDC4 in viral factories. Interacts with rotavirus A non-structural protein 5; this interaction probably plays a role in its sequestration in viral factories.

The protein localises to the cytoplasm. Its subcellular location is the P-body. It is found in the nucleus. In the process of mRNA degradation, seems to play a role in mRNA decapping. Component of a complex containing DCP2 and DCP1A which functions in decapping of ARE-containing mRNAs. Promotes complex formation between DCP1A and DCP2. Enhances the catalytic activity of DCP2 (in vitro). This is Enhancer of mRNA-decapping protein 4 (EDC4) from Homo sapiens (Human).